A 452-amino-acid chain; its full sequence is General transcription and DNA repair factor IIH subunit TFB2 (452 aa).

It belongs to the TFB2 family. As to quaternary structure, component of the 7-subunit TFIIH core complex composed of XPB, XPD, TFB1/GTF2H1, GTF2H2/P44, TFB4/GTF2H3, TFB2/GTF2H4 and TFB5/GTF2H5, which is active in NER. The core complex associates with the 3-subunit CDK-activating kinase (CAK) module composed of CYCH1/cyclin H1, CDKD and MAT1/At4g30820 to form the 10-subunit holoenzyme (holo-TFIIH) active in transcription.

It is found in the nucleus. In terms of biological role, component of the general transcription and DNA repair factor IIH (TFIIH) core complex, which is involved in general and transcription-coupled nucleotide excision repair (NER) of damaged DNA and, when complexed to CAK, in RNA transcription by RNA polymerase II. In NER, TFIIH acts by opening DNA around the lesion to allow the excision of the damaged oligonucleotide and its replacement by a new DNA fragment. In transcription, TFIIH has an essential role in transcription initiation. When the pre-initiation complex (PIC) has been established, TFIIH is required for promoter opening and promoter escape. Phosphorylation of the C-terminal tail (CTD) of the largest subunit of RNA polymerase II by the kinase module CAK controls the initiation of transcription. This chain is General transcription and DNA repair factor IIH subunit TFB2, found in Arabidopsis thaliana (Mouse-ear cress).